The primary structure comprises 205 residues: MEFLWAPLLGLCCSLAAADRHIVFWNSSNPKFREEDYTVHVQLNDYLDIICPHYEDDSVADAAMERYTLYMVEHQEYVACQPQSKDQVRWNCNRPSAKHGPEKLSEKFQRFTPFILGKEFKEGHSYYYISKPIYHQESQCLKLKVTVNGKITHNPQAHVNPQEKRLQADDPEVQVLHSIGYSAAPRLFPLVWAVLLLPLLLLQSQ.

An N-terminal signal peptide occupies residues Met1–Ala17. One can recognise an Ephrin RBD domain in the interval Ala18–Pro161. Asn26 is a glycosylation site (N-linked (GlcNAc...) asparagine). 2 cysteine pairs are disulfide-bonded: Cys51/Cys92 and Cys80/Cys140. Ser182 is lipidated: GPI-anchor amidated serine. Residues Ala183–Gln205 constitute a propeptide, removed in mature form.

This sequence belongs to the ephrin family. In terms of assembly, monomer. Homodimer. Forms heterodimers with EPHA2. Binds to the receptor tyrosine kinases EPHA2, EPHA3, EPHA4, EPHA5, EPHA6 and EPHA7. Also binds with low affinity to EPHA1. Undergoes proteolysis by a metalloprotease to give rise to a soluble monomeric form. In terms of processing, N-Glycosylation is required for binding to EPHA2 receptor and inducing its internalization. In terms of tissue distribution, expressed in myogenic progenitor cells.

The protein localises to the cell membrane. Its subcellular location is the secreted. Cell surface GPI-bound ligand for Eph receptors, a family of receptor tyrosine kinases which are crucial for migration, repulsion and adhesion during neuronal, vascular and epithelial development. Binds promiscuously Eph receptors residing on adjacent cells, leading to contact-dependent bidirectional signaling into neighboring cells. Plays an important role in angiogenesis and tumor neovascularization. The recruitment of VAV2, VAV3 and PI3-kinase p85 subunit by phosphorylated EPHA2 is critical for EFNA1-induced RAC1 GTPase activation and vascular endothelial cell migration and assembly. Exerts anti-oncogenic effects in tumor cells through activation and down-regulation of EPHA2. Activates EPHA2 by inducing tyrosine phosphorylation which leads to its internalization and degradation. Acts as a negative regulator in the tumorigenesis of gliomas by down-regulating EPHA2 and FAK. Can evoke collapse of embryonic neuronal growth cone and regulates dendritic spine morphogenesis. This chain is Ephrin-A1 (Efna1), found in Mus musculus (Mouse).